The following is a 550-amino-acid chain: Methionine--tRNA ligase (550 aa).

A 'HIGH' region motif is present at residues 14–24 (PYANGSLHIGH). 4 residues coordinate Zn(2+): cysteine 145, cysteine 148, cysteine 158, and cysteine 161. The 'KMSKS' region signature appears at 331–335 (KMSKS). Lysine 334 contributes to the ATP binding site.

This sequence belongs to the class-I aminoacyl-tRNA synthetase family. MetG type 1 subfamily. In terms of assembly, monomer. The cofactor is Zn(2+).

It is found in the cytoplasm. The catalysed reaction is tRNA(Met) + L-methionine + ATP = L-methionyl-tRNA(Met) + AMP + diphosphate. Is required not only for elongation of protein synthesis but also for the initiation of all mRNA translation through initiator tRNA(fMet) aminoacylation. The sequence is that of Methionine--tRNA ligase from Wigglesworthia glossinidia brevipalpis.